Reading from the N-terminus, the 342-residue chain is uncharacterized protein (342 aa).

9 to 31 (LIFGGTTGIGLMTTIDFIIHNTS) is an NADP(+) binding site. S208 is a binding site for substrate. Catalysis depends on Y222, which acts as the Proton acceptor.

Belongs to the short-chain dehydrogenases/reductases (SDR) family.

This is an uncharacterized protein from Acanthamoeba polyphaga (Amoeba).